A 308-amino-acid polypeptide reads, in one-letter code: Acetyl-coenzyme A carboxylase carboxyl transferase subunit beta (308 aa).

Positions 26-295 (LWIKDPETGE…EQKPLEPEIL (270 aa)) constitute a CoA carboxyltransferase N-terminal domain.

This sequence belongs to the AccD/PCCB family. In terms of assembly, acetyl-CoA carboxylase is a heterohexamer composed of biotin carboxyl carrier protein (AccB), biotin carboxylase (AccC) and two subunits each of ACCase subunit alpha (AccA) and ACCase subunit beta (AccD).

Its subcellular location is the cytoplasm. It carries out the reaction N(6)-carboxybiotinyl-L-lysyl-[protein] + acetyl-CoA = N(6)-biotinyl-L-lysyl-[protein] + malonyl-CoA. It participates in lipid metabolism; malonyl-CoA biosynthesis; malonyl-CoA from acetyl-CoA: step 1/1. In terms of biological role, component of the acetyl coenzyme A carboxylase (ACC) complex. Biotin carboxylase (BC) catalyzes the carboxylation of biotin on its carrier protein (BCCP) and then the CO(2) group is transferred by the transcarboxylase to acetyl-CoA to form malonyl-CoA. The protein is Acetyl-coenzyme A carboxylase carboxyl transferase subunit beta of Mesorhizobium japonicum (strain LMG 29417 / CECT 9101 / MAFF 303099) (Mesorhizobium loti (strain MAFF 303099)).